Consider the following 248-residue polypeptide: 3-deoxy-manno-octulosonate cytidylyltransferase (248 aa).

The protein belongs to the KdsB family.

It is found in the cytoplasm. The catalysed reaction is 3-deoxy-alpha-D-manno-oct-2-ulosonate + CTP = CMP-3-deoxy-beta-D-manno-octulosonate + diphosphate. It functions in the pathway nucleotide-sugar biosynthesis; CMP-3-deoxy-D-manno-octulosonate biosynthesis; CMP-3-deoxy-D-manno-octulosonate from 3-deoxy-D-manno-octulosonate and CTP: step 1/1. It participates in bacterial outer membrane biogenesis; lipopolysaccharide biosynthesis. In terms of biological role, activates KDO (a required 8-carbon sugar) for incorporation into bacterial lipopolysaccharide in Gram-negative bacteria. The polypeptide is 3-deoxy-manno-octulosonate cytidylyltransferase (Escherichia coli O6:H1 (strain CFT073 / ATCC 700928 / UPEC)).